Here is a 198-residue protein sequence, read N- to C-terminus: Sortase D (198 aa).

A helical transmembrane segment spans residues 7–25 (LFIIAAGLVIAGYGGFKLI). Over residues 36 to 46 (KEAKLAAKKPQ) the composition is skewed to basic and acidic residues. The tract at residues 36 to 67 (KEAKLAAKKPQEASGTKNSTDQAKNKASFKPE) is disordered. Residues 48–57 (ASGTKNSTDQ) are compositionally biased toward polar residues. Histidine 119 acts as the Proton donor/acceptor in catalysis. Cysteine 177 functions as the Acyl-thioester intermediate in the catalytic mechanism.

The protein belongs to the bacterial sortase family. Class D subfamily.

The protein localises to the cell membrane. In terms of biological role, transpeptidase that anchors surface proteins to the cell wall. Recognizes and modifies its substrate by proteolytic cleavage of a C-terminal sorting signal. Following cleavage, a covalent intermediate is formed via a thioester bond between the sortase and its substrate, which is then transferred and covalently attached to the cell wall. This sortase recognizes a Leu-Pro-Asp-Thr-Ser/Ala (LPDTS/A) motif. It has two substrates, YhcR and YfkN. The chain is Sortase D from Bacillus subtilis (strain 168).